We begin with the raw amino-acid sequence, 218 residues long: Phosphatidylserine decarboxylase proenzyme (218 aa).

Ser188 functions as the Schiff-base intermediate with substrate; via pyruvic acid in the catalytic mechanism. Residue Ser188 is modified to Pyruvic acid (Ser); by autocatalysis.

This sequence belongs to the phosphatidylserine decarboxylase family. PSD-A subfamily. As to quaternary structure, heterodimer of a large membrane-associated beta subunit and a small pyruvoyl-containing alpha subunit. Pyruvate serves as cofactor. In terms of processing, is synthesized initially as an inactive proenzyme. Formation of the active enzyme involves a self-maturation process in which the active site pyruvoyl group is generated from an internal serine residue via an autocatalytic post-translational modification. Two non-identical subunits are generated from the proenzyme in this reaction, and the pyruvate is formed at the N-terminus of the alpha chain, which is derived from the carboxyl end of the proenzyme. The post-translation cleavage follows an unusual pathway, termed non-hydrolytic serinolysis, in which the side chain hydroxyl group of the serine supplies its oxygen atom to form the C-terminus of the beta chain, while the remainder of the serine residue undergoes an oxidative deamination to produce ammonia and the pyruvoyl prosthetic group on the alpha chain.

It is found in the cell membrane. It carries out the reaction a 1,2-diacyl-sn-glycero-3-phospho-L-serine + H(+) = a 1,2-diacyl-sn-glycero-3-phosphoethanolamine + CO2. It functions in the pathway phospholipid metabolism; phosphatidylethanolamine biosynthesis; phosphatidylethanolamine from CDP-diacylglycerol: step 2/2. Functionally, catalyzes the formation of phosphatidylethanolamine (PtdEtn) from phosphatidylserine (PtdSer). The protein is Phosphatidylserine decarboxylase proenzyme of Streptomyces coelicolor (strain ATCC BAA-471 / A3(2) / M145).